Reading from the N-terminus, the 135-residue chain is UPF0299 membrane protein Spro_1570 (135 aa).

Helical transmembrane passes span 4–24, 30–50, 63–83, and 93–113; these read LFTLCWKYLRAIVLIYLCLFA, ALLPIAIPGSIIGMLLLFALL, GCHLLIRYMVLLFVPIGVGVM, and LGPLVVSCIISTLMVLVVVGY.

The protein belongs to the UPF0299 family.

The protein resides in the cell inner membrane. The chain is UPF0299 membrane protein Spro_1570 from Serratia proteamaculans (strain 568).